Here is a 538-residue protein sequence, read N- to C-terminus: Cytochrome c-552 (538 aa).

Residues 1–55 (MKIYLRFVWILIIILNFLLNLFITTNGVIIVNAFKKSLIVAASFASLSLFNSATA) form the signal peptide. Histidine 133 contributes to the heme c binding site. Heme-binding residues include cysteine 161, cysteine 164, and lysine 165. Residues cysteine 199, cysteine 202, histidine 203, cysteine 264, cysteine 267, and histidine 268 each contribute to the heme c site. Ca(2+) contacts are provided by glutamate 270, tyrosine 271, lysine 316, and glutamine 318. Position 271 (tyrosine 271) interacts with substrate. Position 319 (histidine 319) interacts with substrate. Heme c is bound by residues histidine 330, cysteine 337, cysteine 340, histidine 341, histidine 356, cysteine 369, cysteine 372, histidine 373, and histidine 448.

Belongs to the cytochrome c-552 family. Ca(2+) is required as a cofactor. It depends on heme c as a cofactor.

The protein resides in the periplasm. The catalysed reaction is 6 Fe(III)-[cytochrome c] + NH4(+) + 2 H2O = 6 Fe(II)-[cytochrome c] + nitrite + 8 H(+). The protein operates within nitrogen metabolism; nitrate reduction (assimilation). Catalyzes the reduction of nitrite to ammonia, consuming six electrons in the process. The sequence is that of Cytochrome c-552 from Haemophilus influenzae (strain ATCC 51907 / DSM 11121 / KW20 / Rd).